Consider the following 415-residue polypeptide: MDVNGHPKFQPSPETDGPLPLTSSTLMVSKSLQQDSLSMVGDRLPPKTGAVVIDMGTGTCKVGFAGQSQPTYTVATILGCQPKKQATKDQSELETFIGEAARSRPELRLVKPIRNGIVVDWEAAELIWRHILEHDLQVATHEHPLLFSDPPFSPATNREKLVEVAFESLHSPALYVASQSVLSVYAHGRVNGLVVDTGHGVSYTVPVVQGYNLPHAIQRLDLAGNHLTAFLAEMLLGSGFSLQQEDLDLVENIKHHYCYLAPDFQKEQARPDEECKQSLKLPDGRTVTLGKELFQCPELLFHPPEIPGLSPIGLPAMAEQSLLKVPQELRPHVARNVILCGGSSLFTGLEGRFRAELLHSLSPEDHVVVMAHPNRNLSVWIGGSILASLHAFQSCWVLREQYEERGPQVVYRKCY.

The tract at residues 1–22 (MDVNGHPKFQPSPETDGPLPLT) is disordered.

It belongs to the actin family. In terms of assembly, interacts with ACTL7A.

The protein resides in the cytoplasmic vesicle. Its subcellular location is the secretory vesicle. It localises to the acrosome. The protein localises to the cytoplasm. It is found in the cytoskeleton. The protein resides in the perinuclear theca. Its function is as follows. Testis-specic protein that plays an important role in fusion of proacrosomal vesicles and perinuclear theca formation. The sequence is that of Actin-like protein 9 (Actl9) from Mus musculus (Mouse).